A 305-amino-acid polypeptide reads, in one-letter code: Nucleotide-binding protein Mjls_2437 (305 aa).

28-35 (GLSGAGRG) is an ATP binding site. Position 79 to 82 (79 to 82 (DVRS)) interacts with GTP.

The protein belongs to the RapZ-like family.

In terms of biological role, displays ATPase and GTPase activities. The sequence is that of Nucleotide-binding protein Mjls_2437 from Mycobacterium sp. (strain JLS).